We begin with the raw amino-acid sequence, 63 residues long: MSKRCAITGKGPMVGNNVSHANNRTKRRFMPNLRTVRVMLEDGTTRKIRVAASTLRTMKKQSH.

A disordered region spans residues 1-20 (MSKRCAITGKGPMVGNNVSH).

It belongs to the bacterial ribosomal protein bL28 family.

The chain is Large ribosomal subunit protein bL28 from Campylobacter fetus subsp. fetus (strain 82-40).